The sequence spans 244 residues: Chaperone protein FimB/FhaD (244 aa).

Residues 1–24 (MARWRRRLGVAALGAAMLASLAPA) form the signal peptide.

The protein belongs to the periplasmic pilus chaperone family.

It is found in the periplasm. Required for the biogenesis of the filamentous hemagglutinin and the fimbria. The sequence is that of Chaperone protein FimB/FhaD (fimB) from Bordetella pertussis (strain Tohama I / ATCC BAA-589 / NCTC 13251).